Reading from the N-terminus, the 103-residue chain is Small ribosomal subunit protein uS10 (103 aa).

This sequence belongs to the universal ribosomal protein uS10 family. Part of the 30S ribosomal subunit.

Involved in the binding of tRNA to the ribosomes. The polypeptide is Small ribosomal subunit protein uS10 (Polynucleobacter asymbioticus (strain DSM 18221 / CIP 109841 / QLW-P1DMWA-1) (Polynucleobacter necessarius subsp. asymbioticus)).